The chain runs to 227 residues: MAYPFQLGLQDATSPIMEELMNFHDHTLMIVFLISSLVLYIISLMLTTKLTHTSTMDAQEVETIWTILPAAILILIALPSLRILYMMDEINNPVLTVKTMGHQWYWSYEYTDYEDLCFDSYMIPTNELKPGELRLLEVDNRVVLPMELPIRMLISSEDVLHSWAVPSLGLKTDAIPGRLNQATVTSNRPGLFYGQCSEICGSNHSFMPIVLEMVPLKYFENWSASMI.

The Mitochondrial intermembrane segment spans residues 1–14 (MAYPFQLGLQDATS). Residues 15–45 (PIMEELMNFHDHTLMIVFLISSLVLYIISLM) traverse the membrane as a helical segment. At 46 to 59 (LTTKLTHTSTMDAQ) the chain is on the mitochondrial matrix side. Residues 60–87 (EVETIWTILPAAILILIALPSLRILYMM) traverse the membrane as a helical segment. Residues 88–227 (DEINNPVLTV…YFENWSASMI (140 aa)) are Mitochondrial intermembrane-facing. The Cu cation site is built by H161, C196, E198, C200, H204, and M207. E198 is a Mg(2+) binding site.

It belongs to the cytochrome c oxidase subunit 2 family. In terms of assembly, component of the cytochrome c oxidase (complex IV, CIV), a multisubunit enzyme composed of 14 subunits. The complex is composed of a catalytic core of 3 subunits MT-CO1, MT-CO2 and MT-CO3, encoded in the mitochondrial DNA, and 11 supernumerary subunits COX4I, COX5A, COX5B, COX6A, COX6B, COX6C, COX7A, COX7B, COX7C, COX8 and NDUFA4, which are encoded in the nuclear genome. The complex exists as a monomer or a dimer and forms supercomplexes (SCs) in the inner mitochondrial membrane with NADH-ubiquinone oxidoreductase (complex I, CI) and ubiquinol-cytochrome c oxidoreductase (cytochrome b-c1 complex, complex III, CIII), resulting in different assemblies (supercomplex SCI(1)III(2)IV(1) and megacomplex MCI(2)III(2)IV(2)). Found in a complex with TMEM177, COA6, COX18, COX20, SCO1 and SCO2. Interacts with TMEM177 in a COX20-dependent manner. Interacts with COX20. Interacts with COX16. It depends on Cu cation as a cofactor.

It is found in the mitochondrion inner membrane. The enzyme catalyses 4 Fe(II)-[cytochrome c] + O2 + 8 H(+)(in) = 4 Fe(III)-[cytochrome c] + 2 H2O + 4 H(+)(out). Functionally, component of the cytochrome c oxidase, the last enzyme in the mitochondrial electron transport chain which drives oxidative phosphorylation. The respiratory chain contains 3 multisubunit complexes succinate dehydrogenase (complex II, CII), ubiquinol-cytochrome c oxidoreductase (cytochrome b-c1 complex, complex III, CIII) and cytochrome c oxidase (complex IV, CIV), that cooperate to transfer electrons derived from NADH and succinate to molecular oxygen, creating an electrochemical gradient over the inner membrane that drives transmembrane transport and the ATP synthase. Cytochrome c oxidase is the component of the respiratory chain that catalyzes the reduction of oxygen to water. Electrons originating from reduced cytochrome c in the intermembrane space (IMS) are transferred via the dinuclear copper A center (CU(A)) of subunit 2 and heme A of subunit 1 to the active site in subunit 1, a binuclear center (BNC) formed by heme A3 and copper B (CU(B)). The BNC reduces molecular oxygen to 2 water molecules using 4 electrons from cytochrome c in the IMS and 4 protons from the mitochondrial matrix. The protein is Cytochrome c oxidase subunit 2 (MT-CO2) of Leggadina forresti (Forrest's mouse).